The primary structure comprises 218 residues: Adenylate kinase (218 aa).

10-15 (GAGKGT) is a binding site for ATP. The tract at residues 30–59 (STGDMLRAAVKAGTPLGIEAKKVMDAGGLM) is NMP. Residues Thr-31, Arg-36, 57–59 (GLM), 85–88 (GYPR), and Gln-92 each bind AMP. The interval 122-159 (GRWVHLASGRSYNTQSNPPKVAGQDDITGEALIQRDDD) is LID. ATP is bound by residues Arg-123 and 132 to 133 (SY). 2 residues coordinate AMP: Arg-156 and Arg-167. Gly-203 serves as a coordination point for ATP.

Belongs to the adenylate kinase family. As to quaternary structure, monomer.

Its subcellular location is the cytoplasm. It catalyses the reaction AMP + ATP = 2 ADP. The protein operates within purine metabolism; AMP biosynthesis via salvage pathway; AMP from ADP: step 1/1. In terms of biological role, catalyzes the reversible transfer of the terminal phosphate group between ATP and AMP. Plays an important role in cellular energy homeostasis and in adenine nucleotide metabolism. This is Adenylate kinase from Bordetella avium (strain 197N).